The primary structure comprises 318 residues: Glutathione synthetase (318 aa).

One can recognise an ATP-grasp domain in the interval 128–313 (KLAILNFSRF…VAAMFADAVA (186 aa)). Residue 154 to 210 (LKEHGDIIIKPLDGMGGMGIFRLTEKDPNIGSILETLMQLDSRTIMAQRYIPEIVHG) participates in ATP binding. Positions 284 and 286 each coordinate Mg(2+).

This sequence belongs to the prokaryotic GSH synthase family. Mg(2+) is required as a cofactor. It depends on Mn(2+) as a cofactor.

It carries out the reaction gamma-L-glutamyl-L-cysteine + glycine + ATP = glutathione + ADP + phosphate + H(+). The protein operates within sulfur metabolism; glutathione biosynthesis; glutathione from L-cysteine and L-glutamate: step 2/2. The chain is Glutathione synthetase from Neisseria meningitidis serogroup A / serotype 4A (strain DSM 15465 / Z2491).